The sequence spans 210 residues: 3-hexulose-6-phosphate synthase (210 aa).

The protein belongs to the HPS/KGPDC family. HPS subfamily.

It catalyses the reaction D-ribulose 5-phosphate + formaldehyde = D-arabino-hex-3-ulose 6-phosphate. It functions in the pathway one-carbon metabolism; formaldehyde assimilation via RuMP pathway; D-fructose 6-phosphate from D-ribulose 5-phosphate and formaldehyde: step 1/2. In terms of biological role, catalyzes the condensation of ribulose 5-phosphate with formaldehyde to form 3-hexulose 6-phosphate. The sequence is that of 3-hexulose-6-phosphate synthase from Staphylococcus aureus (strain NCTC 8325 / PS 47).